Reading from the N-terminus, the 622-residue chain is uncharacterized protein (622 aa).

Cys-302, Cys-306, Cys-310, and Cys-521 together coordinate [4Fe-4S] cluster.

The protein belongs to the AOR/FOR family. The cofactor is [4Fe-4S] cluster.

This is an uncharacterized protein from Methanocaldococcus jannaschii (strain ATCC 43067 / DSM 2661 / JAL-1 / JCM 10045 / NBRC 100440) (Methanococcus jannaschii).